Reading from the N-terminus, the 226-residue chain is Ribosome maturation factor RimM (226 aa).

In terms of domain architecture, PRC barrel spans 144–225; it reads ADEFYWVDLI…RIVVDWEADY (82 aa).

It belongs to the RimM family. Binds ribosomal protein uS19.

It is found in the cytoplasm. In terms of biological role, an accessory protein needed during the final step in the assembly of 30S ribosomal subunit, possibly for assembly of the head region. Essential for efficient processing of 16S rRNA. May be needed both before and after RbfA during the maturation of 16S rRNA. It has affinity for free ribosomal 30S subunits but not for 70S ribosomes. The sequence is that of Ribosome maturation factor RimM from Burkholderia ambifaria (strain ATCC BAA-244 / DSM 16087 / CCUG 44356 / LMG 19182 / AMMD) (Burkholderia cepacia (strain AMMD)).